The chain runs to 218 residues: UPF0177 protein YaiF (218 aa).

Transmembrane regions (helical) follow at residues Ser-8–Leu-28, Phe-48–Phe-68, Ile-81–Phe-101, Ile-123–Leu-143, and Phe-163–Gly-183.

This sequence belongs to the UPF0177 family.

It localises to the cell membrane. In Lactococcus lactis subsp. lactis (strain IL1403) (Streptococcus lactis), this protein is UPF0177 protein YaiF (yaiF).